Reading from the N-terminus, the 245-residue chain is 6-carboxyhexanoate--CoA ligase (245 aa).

This sequence belongs to the BioW family. Homodimer. Requires Mg(2+) as cofactor.

The catalysed reaction is heptanedioate + ATP + CoA = 6-carboxyhexanoyl-CoA + AMP + diphosphate. The protein operates within metabolic intermediate metabolism; pimeloyl-CoA biosynthesis; pimeloyl-CoA from pimelate: step 1/1. Its function is as follows. Catalyzes the transformation of pimelate into pimeloyl-CoA with concomitant hydrolysis of ATP to AMP. This Methanococcus vannielii (strain ATCC 35089 / DSM 1224 / JCM 13029 / OCM 148 / SB) protein is 6-carboxyhexanoate--CoA ligase.